We begin with the raw amino-acid sequence, 799 residues long: Protein scabrous (799 aa).

The N-terminal stretch at 1–51 (MRDWQTFPDLQKKKVSRDHLNCPATMAGSNVLWPILLAVVLLQISVAFVSG) is a signal peptide. A disordered region spans residues 287 to 316 (TRKDGSSASVEEESGSQEANQEQTGLETTA). Asparagine 372 carries N-linked (GlcNAc...) asparagine glycosylation. The segment covering 489 to 498 (LNKPHKRPHH) has biased composition (basic residues). The disordered stretch occupies residues 489-509 (LNKPHKRPHHQNVQAQMPQDD). The Fibrinogen C-terminal domain occupies 533-737 (AIINKLPHDC…SSRMLVKRLP (205 aa)). A disulfide bridge connects residues cysteine 542 and cysteine 568. Asparagine 587, asparagine 618, and asparagine 660 each carry an N-linked (GlcNAc...) asparagine glycan. Cysteine 687 and cysteine 700 are disulfide-bonded. Asparagine 744 and asparagine 787 each carry an N-linked (GlcNAc...) asparagine glycan.

In terms of processing, possesses five pairs of dibasic residues that may be the target of proteolytic processing.

The protein resides in the late endosome. Involved in regulation of neurogenesis. May encode a lateral inhibitor of R8 differentiation. In conjunction with Gp150, promotes Notch activation in response to Delta by regulating acquisition of insensitivity to Delta in a subset of cells. The chain is Protein scabrous (sca) from Drosophila melanogaster (Fruit fly).